The chain runs to 242 residues: Eukaryotic translation initiation factor 3 subunit J (242 aa).

The span at 1–10 shows a compositional bias: acidic residues; the sequence is MASWDDEDFE. 3 disordered regions span residues 1 to 58, 71 to 97, and 201 to 242; these read MASW…KAQR, MKLK…MMNA, and REEK…DDFM. Low complexity predominate over residues 11–21; sequence VPAAATPAVPA. Positions 23-38 are enriched in acidic residues; that stretch reads WDDDEEEDVMDSWDAE. Over residues 71–89 the composition is skewed to basic and acidic residues; that stretch reads MKLKPEDASTKRDRQRQAE.

The protein belongs to the eIF-3 subunit J family. As to quaternary structure, component of the eukaryotic translation initiation factor 3 (eIF-3) complex.

Its subcellular location is the cytoplasm. Component of the eukaryotic translation initiation factor 3 (eIF-3) complex, which is involved in protein synthesis of a specialized repertoire of mRNAs and, together with other initiation factors, stimulates binding of mRNA and methionyl-tRNAi to the 40S ribosome. The eIF-3 complex specifically targets and initiates translation of a subset of mRNAs involved in cell proliferation. This chain is Eukaryotic translation initiation factor 3 subunit J, found in Yarrowia lipolytica (strain CLIB 122 / E 150) (Yeast).